A 465-amino-acid chain; its full sequence is Cysteine--tRNA ligase (465 aa).

Cysteine 27 serves as a coordination point for Zn(2+). Positions 29-39 (PTVYNYIHIGN) match the 'HIGH' region motif. Zn(2+) contacts are provided by cysteine 207, histidine 232, and glutamate 236. The short motif at 264–268 (KMSKS) is the 'KMSKS' region element. ATP is bound at residue lysine 267.

It belongs to the class-I aminoacyl-tRNA synthetase family. Monomer. Requires Zn(2+) as cofactor.

The protein localises to the cytoplasm. It catalyses the reaction tRNA(Cys) + L-cysteine + ATP = L-cysteinyl-tRNA(Cys) + AMP + diphosphate. The polypeptide is Cysteine--tRNA ligase (Clostridioides difficile (strain 630) (Peptoclostridium difficile)).